The sequence spans 804 residues: E3 UFM1-protein ligase 1 homolog (804 aa).

The residue at position 1 (M1) is an N-acetylmethionine. A disordered region spans residues 397–483 (IHPSSKSSES…VKAQESNNII (87 aa)). The span at 400-409 (SSKSSESTES) shows a compositional bias: low complexity. The segment covering 463 to 475 (LDSKAGGKKESVK) has biased composition (basic and acidic residues).

This sequence belongs to the UFL1 family.

Functionally, E3 UFM1-protein ligase that mediates ufmylation of target proteins. The sequence is that of E3 UFM1-protein ligase 1 homolog from Arabidopsis thaliana (Mouse-ear cress).